The primary structure comprises 138 residues: Large ribosomal subunit protein bL19 (138 aa).

Belongs to the bacterial ribosomal protein bL19 family.

Functionally, this protein is located at the 30S-50S ribosomal subunit interface and may play a role in the structure and function of the aminoacyl-tRNA binding site. In Rickettsia africae (strain ESF-5), this protein is Large ribosomal subunit protein bL19.